A 491-amino-acid polypeptide reads, in one-letter code: Aspartyl/glutamyl-tRNA(Asn/Gln) amidotransferase subunit B (491 aa).

The protein belongs to the GatB/GatE family. GatB subfamily. As to quaternary structure, heterotrimer of A, B and C subunits.

The enzyme catalyses L-glutamyl-tRNA(Gln) + L-glutamine + ATP + H2O = L-glutaminyl-tRNA(Gln) + L-glutamate + ADP + phosphate + H(+). It catalyses the reaction L-aspartyl-tRNA(Asn) + L-glutamine + ATP + H2O = L-asparaginyl-tRNA(Asn) + L-glutamate + ADP + phosphate + 2 H(+). Allows the formation of correctly charged Asn-tRNA(Asn) or Gln-tRNA(Gln) through the transamidation of misacylated Asp-tRNA(Asn) or Glu-tRNA(Gln) in organisms which lack either or both of asparaginyl-tRNA or glutaminyl-tRNA synthetases. The reaction takes place in the presence of glutamine and ATP through an activated phospho-Asp-tRNA(Asn) or phospho-Glu-tRNA(Gln). The protein is Aspartyl/glutamyl-tRNA(Asn/Gln) amidotransferase subunit B of Burkholderia ambifaria (strain ATCC BAA-244 / DSM 16087 / CCUG 44356 / LMG 19182 / AMMD) (Burkholderia cepacia (strain AMMD)).